The primary structure comprises 115 residues: Large ribosomal subunit protein bL21 (115 aa).

This sequence belongs to the bacterial ribosomal protein bL21 family. In terms of assembly, part of the 50S ribosomal subunit. Contacts protein L20.

Its function is as follows. This protein binds to 23S rRNA in the presence of protein L20. The polypeptide is Large ribosomal subunit protein bL21 (Coxiella burnetii (strain Dugway 5J108-111)).